We begin with the raw amino-acid sequence, 368 residues long: Molybdenum import ATP-binding protein ModC (368 aa).

An ABC transporter domain is found at 1 to 230; it reads MTIKIQFKQT…HAMRPWQSFS (230 aa). 32–39 contributes to the ATP binding site; it reads GRSGAGKT. One can recognise a Mop domain in the interval 291 to 362; that stretch reads ATSIRNVLPA…VKGVSVTQRD (72 aa).

It belongs to the ABC transporter superfamily. Molybdate importer (TC 3.A.1.8) family. The complex is composed of two ATP-binding proteins (ModC), two transmembrane proteins (ModB) and a solute-binding protein (ModA).

The protein localises to the cell inner membrane. It catalyses the reaction molybdate(out) + ATP + H2O = molybdate(in) + ADP + phosphate + H(+). Its function is as follows. Part of the ABC transporter complex ModABC involved in molybdenum import. Responsible for energy coupling to the transport system. This chain is Molybdenum import ATP-binding protein ModC, found in Vibrio parahaemolyticus serotype O3:K6 (strain RIMD 2210633).